We begin with the raw amino-acid sequence, 181 residues long: Putative poly [ADP-ribose] polymerase-like 100L (181 aa).

Residues 1–181 (MDNLKEEETN…KIKYIIHITK (181 aa)) form the PARP catalytic domain.

The catalysed reaction is NAD(+) + (ADP-D-ribosyl)n-acceptor = nicotinamide + (ADP-D-ribosyl)n+1-acceptor + H(+).. The chain is Putative poly [ADP-ribose] polymerase-like 100L from Invertebrate iridescent virus 6 (IIV-6).